The sequence spans 92 residues: Probable Fe(2+)-trafficking protein (92 aa).

This sequence belongs to the Fe(2+)-trafficking protein family.

Could be a mediator in iron transactions between iron acquisition and iron-requiring processes, such as synthesis and/or repair of Fe-S clusters in biosynthetic enzymes. This is Probable Fe(2+)-trafficking protein from Shewanella loihica (strain ATCC BAA-1088 / PV-4).